Here is a 330-residue protein sequence, read N- to C-terminus: Malate dehydrogenase (330 aa).

12 to 18 is a binding site for NAD(+); the sequence is GAAGQIG. 2 residues coordinate substrate: Arg-93 and Arg-99. NAD(+)-binding positions include Asn-106, Gln-113, and 130–132; that span reads VGN. Substrate is bound by residues Asn-132 and Arg-166. Residue His-191 is the Proton acceptor of the active site.

It belongs to the LDH/MDH superfamily. MDH type 2 family.

It carries out the reaction (S)-malate + NAD(+) = oxaloacetate + NADH + H(+). Functionally, catalyzes the reversible oxidation of malate to oxaloacetate. This Azoarcus sp. (strain BH72) protein is Malate dehydrogenase.